A 209-amino-acid chain; its full sequence is MSKTPLSIAHPWHGPVLTRDDYESLCCYIEITPADSVKFELDKETGILKVDRPQKFSNFCPCLYGLLPKTYCGDLSGEYSGQQSNRENIKGDGDPLDICVLTEKNITQGNILLQARPIGGIRILDSEEADDKIIAVLEDDLVYGNIEDISECPGTVLDMIQHYFLTYKATPESLIQAKPAKIEIVGLYGKKEAQKVIRLAHEDYCNLFM.

Substrate contacts are provided by lysine 38, arginine 52, and tyrosine 64. Residues aspartate 92, aspartate 97, and aspartate 130 each coordinate Mg(2+). Tyrosine 167 serves as a coordination point for substrate.

The protein belongs to the PPase family. In terms of assembly, homohexamer. Mg(2+) serves as cofactor.

The protein resides in the cytoplasm. The enzyme catalyses diphosphate + H2O = 2 phosphate + H(+). Catalyzes the hydrolysis of inorganic pyrophosphate (PPi) forming two phosphate ions. The polypeptide is Inorganic pyrophosphatase (Chlamydia trachomatis serovar L2 (strain ATCC VR-902B / DSM 19102 / 434/Bu)).